The chain runs to 100 residues: Transcription and mRNA export factor SUS1 (100 aa).

Belongs to the ENY2 family. In terms of assembly, component of the nuclear pore complex (NPC)-associated TREX-2 complex (transcription and export complex 2), composed of at least SUS1, SAC3, THP1, SEM1, and CDC31. TREX-2 contains 2 SUS1 chains. The TREX-2 complex interacts with the nucleoporin NUP1. Component of the 1.8 MDa SAGA transcription coactivator-HAT complex. SAGA is built of 5 distinct domains with specialized functions. Within the SAGA complex, SUS1, SGF11, SGF73 and UBP8 form an additional subcomplex of SAGA called the DUB module (deubiquitination module). Interacts directly with THP1, SAC3, SGF11, and with the RNA polymerase II.

It is found in the nucleus. It localises to the nucleoplasm. The protein localises to the cytoplasm. The protein resides in the P-body. Involved in mRNA export coupled transcription activation by association with both the TREX-2 and the SAGA complexes. At the promoters, SAGA is required for recruitment of the basal transcription machinery. It influences RNA polymerase II transcriptional activity through different activities such as TBP interaction and promoter selectivity, interaction with transcription activators, and chromatin modification through histone acetylation and deubiquitination. Within the SAGA complex, participates in a subcomplex required for deubiquitination of H2B and for the maintenance of steady-state H3 methylation levels. The TREX-2 complex functions in docking export-competent ribonucleoprotein particles (mRNPs) to the nuclear entrance of the nuclear pore complex (nuclear basket). TREX-2 participates in mRNA export and accurate chromatin positioning in the nucleus by tethering genes to the nuclear periphery. May also be involved in cytoplasmic mRNA decay by interaction with components of P-bodies. This chain is Transcription and mRNA export factor SUS1, found in Cryptococcus neoformans var. neoformans serotype D (strain B-3501A) (Filobasidiella neoformans).